Consider the following 360-residue polypeptide: UDP-N-acetylglucosamine--N-acetylmuramyl-(pentapeptide) pyrophosphoryl-undecaprenol N-acetylglucosamine transferase (360 aa).

Ser-198 and Gln-289 together coordinate UDP-N-acetyl-alpha-D-glucosamine.

It belongs to the glycosyltransferase 28 family. MurG subfamily.

The protein resides in the cell membrane. The catalysed reaction is Mur2Ac(oyl-L-Ala-gamma-D-Glu-L-Lys-D-Ala-D-Ala)-di-trans,octa-cis-undecaprenyl diphosphate + UDP-N-acetyl-alpha-D-glucosamine = beta-D-GlcNAc-(1-&gt;4)-Mur2Ac(oyl-L-Ala-gamma-D-Glu-L-Lys-D-Ala-D-Ala)-di-trans,octa-cis-undecaprenyl diphosphate + UDP + H(+). It functions in the pathway cell wall biogenesis; peptidoglycan biosynthesis. In terms of biological role, cell wall formation. Catalyzes the transfer of a GlcNAc subunit on undecaprenyl-pyrophosphoryl-MurNAc-pentapeptide (lipid intermediate I) to form undecaprenyl-pyrophosphoryl-MurNAc-(pentapeptide)GlcNAc (lipid intermediate II). The polypeptide is UDP-N-acetylglucosamine--N-acetylmuramyl-(pentapeptide) pyrophosphoryl-undecaprenol N-acetylglucosamine transferase (Streptococcus pyogenes serotype M4 (strain MGAS10750)).